The chain runs to 218 residues: Adenylate kinase (218 aa).

Residue 10-15 coordinates ATP; it reads GAGKGT. The segment at 30–59 is NMP; that stretch reads STGDMLRAAVKEETPLGRKAKEVMDSGNLV. Residues Thr31, Arg36, 57-59, 85-88, and Gln92 each bind AMP; these read NLV and GFPR. Residues 122–159 form an LID region; that stretch reads GRRVHPASGRTYHLTFNPPQQQGVDDETGEPLIQRVDD. ATP is bound by residues Arg123 and 132–133; that span reads TY. Positions 156 and 167 each coordinate AMP. Gly203 provides a ligand contact to ATP.

It belongs to the adenylate kinase family. As to quaternary structure, monomer.

Its subcellular location is the cytoplasm. The enzyme catalyses AMP + ATP = 2 ADP. Its pathway is purine metabolism; AMP biosynthesis via salvage pathway; AMP from ADP: step 1/1. Catalyzes the reversible transfer of the terminal phosphate group between ATP and AMP. Plays an important role in cellular energy homeostasis and in adenine nucleotide metabolism. The sequence is that of Adenylate kinase from Chlorobium phaeovibrioides (strain DSM 265 / 1930) (Prosthecochloris vibrioformis (strain DSM 265)).